The sequence spans 215 residues: Probable transaldolase (215 aa).

The active-site Schiff-base intermediate with substrate is the K83.

Belongs to the transaldolase family. Type 3B subfamily.

The protein localises to the cytoplasm. It carries out the reaction D-sedoheptulose 7-phosphate + D-glyceraldehyde 3-phosphate = D-erythrose 4-phosphate + beta-D-fructose 6-phosphate. The protein operates within carbohydrate degradation; pentose phosphate pathway; D-glyceraldehyde 3-phosphate and beta-D-fructose 6-phosphate from D-ribose 5-phosphate and D-xylulose 5-phosphate (non-oxidative stage): step 2/3. Its function is as follows. Transaldolase is important for the balance of metabolites in the pentose-phosphate pathway. In Streptococcus agalactiae serotype III (strain NEM316), this protein is Probable transaldolase.